The sequence spans 235 residues: Alpha-S2-casein (235 aa).

The N-terminal stretch at 1–15 is a signal peptide; the sequence is MKFFIFTCLLAVAFA. Residues S23, S24, S25, S28, S47, S72, S73, S74, S77, S147, S149, and S168 each carry the phosphoserine modification. Positions 144 to 158 are enriched in polar residues; that stretch reads EELSTSEEPVSSSQE. Positions 144–163 are disordered; that stretch reads EELSTSEEPVSSSQEENTKT.

It belongs to the alpha-casein family. Mammary gland specific. Secreted in milk.

It localises to the secreted. In terms of biological role, important role in the capacity of milk to transport calcium phosphate. The chain is Alpha-S2-casein (CSN1S2) from Sus scrofa (Pig).